A 233-amino-acid polypeptide reads, in one-letter code: 7-cyano-7-deazaguanine synthase 2 (233 aa).

8 to 18 (LSGGLDSTTCM) is a binding site for ATP. Zn(2+)-binding residues include Cys-186, Cys-194, Cys-197, and Cys-200.

It belongs to the QueC family. Homodimer. Zn(2+) serves as cofactor.

The enzyme catalyses 7-carboxy-7-deazaguanine + NH4(+) + ATP = 7-cyano-7-deazaguanine + ADP + phosphate + H2O + H(+). It functions in the pathway purine metabolism; 7-cyano-7-deazaguanine biosynthesis. Functionally, catalyzes the ATP-dependent conversion of 7-carboxy-7-deazaguanine (CDG) to 7-cyano-7-deazaguanine (preQ(0)). This is 7-cyano-7-deazaguanine synthase 2 from Desulfitobacterium hafniense (strain Y51).